Reading from the N-terminus, the 462-residue chain is MSSVKRSPKQEIVTQFHCSAAEGDIAKLTGILSHSPSLLNETSENGWTALMYAARNGHPEIVQFLLEKGCDRSIVNKSRQTALDIAVFWGYKHIANLLATAKGGKKPWFLTNEVEECENYFSKTLLDRKSEKRNNADWLLAKESHPATVFILFSDLNPLVTLGGNKESFQQPEVRLCQLNYKDIKDYLAQPEEITLIFLGVELEMKDKLLNYAGEVPREEEDGLVAWFALGIDPIAAEEFKQRHENCYFLHPPMPALLQLKEKEAGVVAQARSVLAWHSRYKFCPTCGNGTKIEEGGYKRVCLKEDCPSLNGVHNTSYPRVDPVVIMQVIHPDGTRCLLGRQKRFPPGMFTCLAGFIEPGETIEDAVRREVEEESGVKVGHVQYVSCQPWPMPSSLMIGCLAVAVSTEIKVDKNEIEDARWFTREQVLDVLTKGKQQAFFVPPSRAIAHQLIKHWIRINPNL.

3 ANK repeats span residues 11 to 40 (EIVT…SLLN), 45 to 74 (NGWT…DRSI), and 78 to 98 (SRQT…ANLL). An N6-succinyllysine modification is found at K185. Zn(2+) is bound by residues C284 and C287. Residue K292 is modified to N6-succinyllysine. Zn(2+)-binding residues include C302 and C307. Substrate contacts are provided by residues Y318, 354–356 (AGF), E370, E374, and E415. In terms of domain architecture, Nudix hydrolase spans 319 to 453 (PRVDPVVIMQ…SRAIAHQLIK (135 aa)). Mg(2+)-binding residues include A354, E370, E374, and E415. Positions 355–376 (GFIEPGETIEDAVRREVEEESG) match the Nudix box motif. The Microbody targeting signal motif lies at 460-462 (PNL).

The protein belongs to the Nudix hydrolase family. NudC subfamily. In terms of assembly, homodimer. Homodimerization is essential for its catalytic activity and protein stability. Interacts (via ANK repeats) with BLMH. Mg(2+) serves as cofactor. It depends on Zn(2+) as a cofactor.

Its subcellular location is the cytoplasm. It localises to the peroxisome. The protein resides in the cytoplasmic granule. It catalyses the reaction a 5'-end NAD(+)-phospho-ribonucleoside in mRNA + H2O = a 5'-end phospho-adenosine-phospho-ribonucleoside in mRNA + beta-nicotinamide D-ribonucleotide + 2 H(+). It carries out the reaction NAD(+) + H2O = beta-nicotinamide D-ribonucleotide + AMP + 2 H(+). The enzyme catalyses NADH + H2O = reduced beta-nicotinamide D-ribonucleotide + AMP + 2 H(+). The catalysed reaction is NADPH + H2O = reduced beta-nicotinamide D-ribonucleotide + adenosine 2',5'-bisphosphate + 2 H(+). Functionally, mRNA decapping enzyme that specifically removes the nicotinamide adenine dinucleotide (NAD) cap from a subset of mRNAs by hydrolyzing the diphosphate linkage to produce nicotinamide mononucleotide (NMN) and 5' monophosphate mRNA. The NAD-cap is present at the 5'-end of some RNAs; in contrast to the canonical N7 methylguanosine (m7G) cap, the NAD cap promotes mRNA decay. Preferentially acts on NAD-capped transcripts in response to nutrient stress. Also acts on free nicotinamide adenine dinucleotide molecules: hydrolyzes NAD(H) into NMN(H) and AMP, and NADPH into NMNH and 2',5'-ADP. May act to regulate the concentration of peroxisomal nicotinamide nucleotide cofactors required for oxidative metabolism in this organelle. Regulates the levels of circadian clock components PER1, PER2, PER3 and CRY2 in the liver. This Macaca fascicularis (Crab-eating macaque) protein is NAD-capped RNA hydrolase NUDT12.